We begin with the raw amino-acid sequence, 192 residues long: Pyruvate synthase subunit PorC (192 aa).

As to quaternary structure, heterotetramer of one alpha, one beta, one delta and one gamma chain.

The catalysed reaction is 2 oxidized [2Fe-2S]-[ferredoxin] + pyruvate + CoA = 2 reduced [2Fe-2S]-[ferredoxin] + acetyl-CoA + CO2 + H(+). The chain is Pyruvate synthase subunit PorC (porC) from Thermotoga maritima (strain ATCC 43589 / DSM 3109 / JCM 10099 / NBRC 100826 / MSB8).